A 100-amino-acid chain; its full sequence is Pregnancy-associated protein bPAP (100 aa).

Residues 1–40 are disordered; the sequence is DSELAGPRGARGPHGLSGPHGLSGLXGPXGYTGPIGMXGL. Over residues 13–29 the composition is skewed to low complexity; sequence PHGLSGPHGLSGLXGPX.

Detected at high levels in the urine of pregnant females (at protein level) and at far lower levels in the urine of nonpregnant females.

This chain is Pregnancy-associated protein bPAP, found in Bos taurus (Bovine).